A 292-amino-acid chain; its full sequence is G1/S-specific cyclin-D3 (292 aa).

In terms of domain architecture, Cyclin N-terminal spans Val27–Leu152. The tract at residues Leu255–Leu292 is disordered. Phosphoserine occurs at positions 264 and 279. Residues Gly272–Thr285 show a composition bias toward low complexity. Thr283 bears the Phosphothreonine mark.

The protein belongs to the cyclin family. Cyclin D subfamily. Interacts with the CDK4 and CDK6 protein kinases to form a serine/threonine kinase holoenzyme complex. The cyclin subunit imparts substrate specificity to the complex. Interacts with ATF5. Interacts with EIF3K. Component of the ternary complex cyclin D/CDK4/CDKN1B required for nuclear translocation and modulation of CDK4-mediated kinase activity. Can form similar complexes with either CDKN1A or CDKN2A. Post-translationally, phosphorylation at Thr-283 by MAP kinases is required for ubiquitination and degradation by the DCX(AMBRA1) complex. Ubiquitinated by the DCX(AMBRA1) complex during the transition from G1 to S cell phase, leading to its degradation: ubiquitination is dependent on Thr-283 phosphorylation. The DCX(AMBRA1) complex represents the major regulator of CCND3 stability during the G1/S transition. Polyubiquitinated by the SCF(FBXL2) complex, leading to proteasomal degradation.

The protein localises to the nucleus. It localises to the cytoplasm. Regulatory component of the cyclin D3-CDK4 (DC) complex that phosphorylates and inhibits members of the retinoblastoma (RB) protein family including RB1 and regulates the cell-cycle during G(1)/S transition. Phosphorylation of RB1 allows dissociation of the transcription factor E2F from the RB/E2F complex and the subsequent transcription of E2F target genes which are responsible for the progression through the G(1) phase. Hypophosphorylates RB1 in early G(1) phase. Cyclin D-CDK4 complexes are major integrators of various mitogenenic and antimitogenic signals. Component of the ternary complex, cyclin D3/CDK4/CDKN1B, required for nuclear translocation and activity of the cyclin D-CDK4 complex. Shows transcriptional coactivator activity with ATF5 independently of CDK4. The polypeptide is G1/S-specific cyclin-D3 (CCND3) (Bos taurus (Bovine)).